An 831-amino-acid polypeptide reads, in one-letter code: Maltodextrin phosphorylase (831 aa).

K592 carries the N6-(pyridoxal phosphate)lysine modification.

This sequence belongs to the glycogen phosphorylase family. In terms of assembly, trimer (at 25 degrees Celsius). Pyridoxal 5'-phosphate is required as a cofactor.

It catalyses the reaction [(1-&gt;4)-alpha-D-glucosyl](n) + phosphate = [(1-&gt;4)-alpha-D-glucosyl](n-1) + alpha-D-glucose 1-phosphate. Phosphorylase is an important allosteric enzyme in carbohydrate metabolism. Catalyzes the phospholytic cleavage of maltodextrins with a minimal chain length of five glucose residues to yield glucose-1-phosphate. Low activity with tetraose and no activity with triose and maltose. Long maltodextrins (8 to 15 glucose units), amylose and starch are not as good substrates as maltoheptaose. The polypeptide is Maltodextrin phosphorylase (malP) (Thermococcus litoralis (strain ATCC 51850 / DSM 5473 / JCM 8560 / NS-C)).